The sequence spans 140 residues: Small ribosomal subunit protein uS12m (140 aa).

A mitochondrion-targeting transit peptide spans 1-30; that stretch reads MNFLRQSFGITKQLASQAIQCSYETAVRGM.

Belongs to the universal ribosomal protein uS12 family.

It is found in the mitochondrion. The protein is Small ribosomal subunit protein uS12m (tko) of Drosophila melanogaster (Fruit fly).